Consider the following 270-residue polypeptide: Phosphatidylglycerol--prolipoprotein diacylglyceryl transferase (270 aa).

Helical transmembrane passes span 17–37 (LAIRWYGLMYLAGFIMFLWFG), 59–79 (MLFYGVLGVILGGRLGYVLFY), 95–115 (WEGGMAFHGGFLGVLIAMWVF), 129–149 (FIAPMIPCGLAAGRIGNFING), 175–195 (PSQLYQFAGEGVALFIILWLF), 202–222 (MGAVSGVFLIGYGAFRFLAEF), and 237–257 (LSMGQWLSLPMIVIGAVMVVW). Residue arginine 142 coordinates a 1,2-diacyl-sn-glycero-3-phospho-(1'-sn-glycerol).

Belongs to the Lgt family.

The protein resides in the cell inner membrane. The enzyme catalyses L-cysteinyl-[prolipoprotein] + a 1,2-diacyl-sn-glycero-3-phospho-(1'-sn-glycerol) = an S-1,2-diacyl-sn-glyceryl-L-cysteinyl-[prolipoprotein] + sn-glycerol 1-phosphate + H(+). Its pathway is protein modification; lipoprotein biosynthesis (diacylglyceryl transfer). Functionally, catalyzes the transfer of the diacylglyceryl group from phosphatidylglycerol to the sulfhydryl group of the N-terminal cysteine of a prolipoprotein, the first step in the formation of mature lipoproteins. The polypeptide is Phosphatidylglycerol--prolipoprotein diacylglyceryl transferase (Cupriavidus metallidurans (strain ATCC 43123 / DSM 2839 / NBRC 102507 / CH34) (Ralstonia metallidurans)).